We begin with the raw amino-acid sequence, 128 residues long: MHALLLLLLLALGSALRSPQPPEARAKLCGHHLVRALVRVCGGPRWSPEATQPVDTRDRELLQWLEQRHLLHALVADADPALDPDPALDPQLPHQASQRQRRSVATNAVHRCCLTGCTQQDLLGLCPH.

The N-terminal stretch at 1-15 (MHALLLLLLLALGSA) is a signal peptide. Cystine bridges form between C29/C113, C41/C126, and C112/C117. A compositionally biased stretch (low complexity) spans 81-94 (ALDPDPALDPQLPH). Residues 81–101 (ALDPDPALDPQLPHQASQRQR) are disordered.

The protein belongs to the insulin family. In terms of assembly, heterodimer of a B chain and an A chain linked by two disulfide bonds. Expressed in Leydig cells of the testis, and weakly in the theca interna cells of antral follicles and the corpus luteum of the ovary.

It is found in the secreted. Seems to play a role in testicular function. May be a trophic hormone with a role in testicular descent in fetal life. Is a ligand for LGR8 receptor. The sequence is that of Insulin-like 3 (Insl3) from Rattus norvegicus (Rat).